Here is a 346-residue protein sequence, read N- to C-terminus: Elongation factor Ts (346 aa).

The interval 80 to 83 is involved in Mg(2+) ion dislocation from EF-Tu; the sequence is TDFV.

Belongs to the EF-Ts family.

It is found in the cytoplasm. Associates with the EF-Tu.GDP complex and induces the exchange of GDP to GTP. It remains bound to the aminoacyl-tRNA.EF-Tu.GTP complex up to the GTP hydrolysis stage on the ribosome. This chain is Elongation factor Ts, found in Streptococcus agalactiae serotype Ia (strain ATCC 27591 / A909 / CDC SS700).